The following is a 528-amino-acid chain: Glucans biosynthesis protein G 2 (528 aa).

A signal peptide spans Met-1–Gly-44.

Belongs to the OpgD/OpgG family.

Its subcellular location is the periplasm. It functions in the pathway glycan metabolism; osmoregulated periplasmic glucan (OPG) biosynthesis. Its function is as follows. Involved in the biosynthesis of osmoregulated periplasmic glucans (OPGs). The protein is Glucans biosynthesis protein G 2 (opgG2) of Shewanella oneidensis (strain ATCC 700550 / JCM 31522 / CIP 106686 / LMG 19005 / NCIMB 14063 / MR-1).